A 131-amino-acid polypeptide reads, in one-letter code: Peptide methionine sulfoxide reductase MsrB (131 aa).

The 123-residue stretch at 8 to 130 (LEEWKQMLDP…NSVCLDLVPR (123 aa)) folds into the MsrB domain. The Zn(2+) site is built by C47, C50, C96, and C99. Catalysis depends on C119, which acts as the Nucleophile.

This sequence belongs to the MsrB Met sulfoxide reductase family. Requires Zn(2+) as cofactor.

The catalysed reaction is L-methionyl-[protein] + [thioredoxin]-disulfide + H2O = L-methionyl-(R)-S-oxide-[protein] + [thioredoxin]-dithiol. In Pseudomonas syringae pv. syringae (strain B728a), this protein is Peptide methionine sulfoxide reductase MsrB.